The chain runs to 31 residues: leu operon leader peptide (31 aa).

Its function is as follows. Involved in control of the biosynthesis of leucine. This is leu operon leader peptide (leuL) from Buchnera aphidicola subsp. Rhopalosiphum padi.